The sequence spans 104 residues: Urease subunit beta (104 aa).

Belongs to the urease beta subunit family. Heterotrimer of UreA (gamma), UreB (beta) and UreC (alpha) subunits. Three heterotrimers associate to form the active enzyme.

It localises to the cytoplasm. It catalyses the reaction urea + 2 H2O + H(+) = hydrogencarbonate + 2 NH4(+). It functions in the pathway nitrogen metabolism; urea degradation; CO(2) and NH(3) from urea (urease route): step 1/1. In Rhodococcus jostii (strain RHA1), this protein is Urease subunit beta.